Reading from the N-terminus, the 460-residue chain is Argininosuccinate lyase (460 aa).

This sequence belongs to the lyase 1 family. Argininosuccinate lyase subfamily.

It is found in the cytoplasm. It carries out the reaction 2-(N(omega)-L-arginino)succinate = fumarate + L-arginine. Its pathway is amino-acid biosynthesis; L-arginine biosynthesis; L-arginine from L-ornithine and carbamoyl phosphate: step 3/3. The polypeptide is Argininosuccinate lyase (Edwardsiella ictaluri (strain 93-146)).